The primary structure comprises 359 residues: MQAATVVINRRALRHNLQRLRELAPASKMVAVVKANAYGHGLLETARTLPDADAFGVARLEEALRLRAGGITKPVLLLEGFFDARDLPTISAQHFHTAVHNEEQLAALEEASLDEPVTVWMKLDTGMHRLGVRPEQAEAFYHRLTQCKNVRQPVNIVSHFARADEPKCGATEKQLAIFNTFCEGKPGQRSIAASGGILLWPQSHFDWVRPGIILYGVSPLEDRSTGADFGCQPVMSLTSSLIAVREHKVGEPVGYGGTWISERDTRLGVVAMGYGDGYPRAAPSGTPVLVNGREVPIVGRVAMDMICVDLGPQAQDKAGDPVILWGEGLPVERIAEMTKVSAYELIARLTSRVAMKYVD.

Lysine 34 (proton acceptor; specific for D-alanine) is an active-site residue. Lysine 34 carries the N6-(pyridoxal phosphate)lysine modification. Arginine 129 serves as a coordination point for substrate. The Proton acceptor; specific for L-alanine role is filled by tyrosine 255. Methionine 303 contacts substrate.

The protein belongs to the alanine racemase family. Pyridoxal 5'-phosphate serves as cofactor.

The enzyme catalyses L-alanine = D-alanine. The protein operates within amino-acid biosynthesis; D-alanine biosynthesis; D-alanine from L-alanine: step 1/1. Catalyzes the interconversion of L-alanine and D-alanine. May also act on other amino acids. The protein is Alanine racemase (alr) of Shigella dysenteriae serotype 1 (strain Sd197).